We begin with the raw amino-acid sequence, 303 residues long: Probable cell division protein WhiA (303 aa).

The H-T-H motif DNA-binding region spans 272–303 (SIQQLADSLSTPLTKSGVNHRLRKINKIADEL).

It belongs to the WhiA family.

Involved in cell division and chromosome segregation. In Streptococcus pneumoniae (strain Hungary19A-6), this protein is Probable cell division protein WhiA.